The chain runs to 330 residues: Ketol-acid reductoisomerase (NADP(+)) (330 aa).

One can recognise a KARI N-terminal Rossmann domain in the interval M1–T181. NADP(+)-binding positions include Y24–Q27, R47, and D82–Q85. H107 is an active-site residue. Position 133 (G133) interacts with NADP(+). The KARI C-terminal knotted domain maps to T182–L327. Residues D190, E194, E226, and E230 each coordinate Mg(2+). Residue S251 coordinates substrate.

This sequence belongs to the ketol-acid reductoisomerase family. Mg(2+) serves as cofactor.

It catalyses the reaction (2R)-2,3-dihydroxy-3-methylbutanoate + NADP(+) = (2S)-2-acetolactate + NADPH + H(+). The catalysed reaction is (2R,3R)-2,3-dihydroxy-3-methylpentanoate + NADP(+) = (S)-2-ethyl-2-hydroxy-3-oxobutanoate + NADPH + H(+). It participates in amino-acid biosynthesis; L-isoleucine biosynthesis; L-isoleucine from 2-oxobutanoate: step 2/4. Its pathway is amino-acid biosynthesis; L-valine biosynthesis; L-valine from pyruvate: step 2/4. Involved in the biosynthesis of branched-chain amino acids (BCAA). Catalyzes an alkyl-migration followed by a ketol-acid reduction of (S)-2-acetolactate (S2AL) to yield (R)-2,3-dihydroxy-isovalerate. In the isomerase reaction, S2AL is rearranged via a Mg-dependent methyl migration to produce 3-hydroxy-3-methyl-2-ketobutyrate (HMKB). In the reductase reaction, this 2-ketoacid undergoes a metal-dependent reduction by NADPH to yield (R)-2,3-dihydroxy-isovalerate. The polypeptide is Ketol-acid reductoisomerase (NADP(+)) (Nitratidesulfovibrio vulgaris (strain DSM 19637 / Miyazaki F) (Desulfovibrio vulgaris)).